We begin with the raw amino-acid sequence, 467 residues long: MPGVKKRKVAREAPAPAPAQESDVESSTPEQTQEPEAQEQEQEEGQSKTFKELGIIEQLCEACETMGYKAPTPIQRESIPLALKGRDLIGLAETGSGKTAAFALPILQALMEKPQPFFGLVLAPTRELAYQISKSFESLGASMGVRSCVIVGGMDMVSQSISLGKKPHIIVATPGRLLDHLENTKGFSLRNLKYLVMDEADRLLDMDFGPLLDKILKVLPRERRTFLFSATMSSKVESLQRASLSNPLRVSVSTSKYQTVSTLLQSYLFIPQKHKDLYLVYLLNEFAGQSTIIFTRTVNETQRLAFLLRALGFGAIPLHGQLSQSARLGALGKFRARSRNILVATDVAARGLDIPSVDVVLNFDLPGDSPSYVHRVGRTARAGKSGLAISFVAQYDVEVWLRIEGALGKKLKEYDCPKDEVMVLGENVAEAQRQAIMDMKDYNEKKGSRGKKFGGKRSRDEMDQEEG.

Residues 1–48 are disordered; sequence MPGVKKRKVAREAPAPAPAQESDVESSTPEQTQEPEAQEQEQEEGQSK. Residues 48 to 76 carry the Q motif motif; it reads KTFKELGIIEQLCEACETMGYKAPTPIQR. The 172-residue stretch at 79–250 folds into the Helicase ATP-binding domain; it reads IPLALKGRDL…RASLSNPLRV (172 aa). 92–99 is an ATP binding site; the sequence is AETGSGKT. Residues 198-201 carry the DEAD box motif; that stretch reads DEAD. One can recognise a Helicase C-terminal domain in the interval 262-422; sequence TLLQSYLFIP…EYDCPKDEVM (161 aa). The disordered stretch occupies residues 439–467; sequence MKDYNEKKGSRGKKFGGKRSRDEMDQEEG.

This sequence belongs to the DEAD box helicase family. DDX47/RRP3 subfamily. As to quaternary structure, interacts with the SSU processome.

The protein localises to the nucleus. The catalysed reaction is ATP + H2O = ADP + phosphate + H(+). ATP-dependent rRNA helicase required for pre-ribosomal RNA processing. Involved in the maturation of the 35S-pre-rRNA and to its cleavage to mature 18S rRNA. This is ATP-dependent rRNA helicase rrp3 from Aspergillus niger (strain ATCC MYA-4892 / CBS 513.88 / FGSC A1513).